A 486-amino-acid polypeptide reads, in one-letter code: Cysteine--tRNA ligase (486 aa).

Cys29 lines the Zn(2+) pocket. The 'HIGH' region signature appears at 31 to 41; the sequence is VTVYDYCHLGH. Residues Cys214, His239, and Glu243 each contribute to the Zn(2+) site. A 'KMSKS' region motif is present at residues 271-275; the sequence is KMSKS. Lys274 is a binding site for ATP.

This sequence belongs to the class-I aminoacyl-tRNA synthetase family. Monomer. Requires Zn(2+) as cofactor.

Its subcellular location is the cytoplasm. It catalyses the reaction tRNA(Cys) + L-cysteine + ATP = L-cysteinyl-tRNA(Cys) + AMP + diphosphate. The chain is Cysteine--tRNA ligase from Trichormus variabilis (strain ATCC 29413 / PCC 7937) (Anabaena variabilis).